The sequence spans 208 residues: Putative 3-methyladenine DNA glycosylase (208 aa).

Belongs to the DNA glycosylase MPG family.

The protein is Putative 3-methyladenine DNA glycosylase of Lactobacillus delbrueckii subsp. bulgaricus (strain ATCC 11842 / DSM 20081 / BCRC 10696 / JCM 1002 / NBRC 13953 / NCIMB 11778 / NCTC 12712 / WDCM 00102 / Lb 14).